Consider the following 203-residue polypeptide: Holliday junction branch migration complex subunit RuvA (203 aa).

The segment at 1–62 (MYEYFLGQVT…ENGMSLFGFF (62 aa)) is domain I. The segment at 63-141 (DADEKALFEK…DLNVDVTGQT (79 aa)) is domain II. The interval 142–148 (ALDVDAP) is flexible linker. The interval 149 to 203 (AVDGALADALAALEALGYSKADVKKVTKKLETFSQTQGADTNTLLSEGLRLLMKK) is domain III.

The protein belongs to the RuvA family. As to quaternary structure, homotetramer. Forms an RuvA(8)-RuvB(12)-Holliday junction (HJ) complex. HJ DNA is sandwiched between 2 RuvA tetramers; dsDNA enters through RuvA and exits via RuvB. An RuvB hexamer assembles on each DNA strand where it exits the tetramer. Each RuvB hexamer is contacted by two RuvA subunits (via domain III) on 2 adjacent RuvB subunits; this complex drives branch migration. In the full resolvosome a probable DNA-RuvA(4)-RuvB(12)-RuvC(2) complex forms which resolves the HJ.

It localises to the cytoplasm. Its function is as follows. The RuvA-RuvB-RuvC complex processes Holliday junction (HJ) DNA during genetic recombination and DNA repair, while the RuvA-RuvB complex plays an important role in the rescue of blocked DNA replication forks via replication fork reversal (RFR). RuvA specifically binds to HJ cruciform DNA, conferring on it an open structure. The RuvB hexamer acts as an ATP-dependent pump, pulling dsDNA into and through the RuvAB complex. HJ branch migration allows RuvC to scan DNA until it finds its consensus sequence, where it cleaves and resolves the cruciform DNA. The sequence is that of Holliday junction branch migration complex subunit RuvA from Lactiplantibacillus plantarum (strain ATCC BAA-793 / NCIMB 8826 / WCFS1) (Lactobacillus plantarum).